A 435-amino-acid chain; its full sequence is Methylenetetrahydrofolate--tRNA-(uracil-5-)-methyltransferase TrmFO (435 aa).

Position 10-15 (10-15 (GAGLAG)) interacts with FAD.

It belongs to the MnmG family. TrmFO subfamily. In terms of assembly, homodimer. FAD is required as a cofactor.

It is found in the cytoplasm. The enzyme catalyses uridine(54) in tRNA + (6R)-5,10-methylene-5,6,7,8-tetrahydrofolate + NADH + H(+) = 5-methyluridine(54) in tRNA + (6S)-5,6,7,8-tetrahydrofolate + NAD(+). The catalysed reaction is uridine(54) in tRNA + (6R)-5,10-methylene-5,6,7,8-tetrahydrofolate + NADPH + H(+) = 5-methyluridine(54) in tRNA + (6S)-5,6,7,8-tetrahydrofolate + NADP(+). Catalyzes the folate-dependent formation of 5-methyl-uridine at position 54 (M-5-U54) in all tRNAs. The chain is Methylenetetrahydrofolate--tRNA-(uracil-5-)-methyltransferase TrmFO from Bacillus subtilis (strain 168).